The chain runs to 163 residues: ATP synthase subunit b 1 (163 aa).

The helical transmembrane segment at 7–27 threads the bilayer; sequence AETWVAVAFVILMALFAYLGV.

The protein belongs to the ATPase B chain family. In terms of assembly, F-type ATPases have 2 components, F(1) - the catalytic core - and F(0) - the membrane proton channel. F(1) has five subunits: alpha(3), beta(3), gamma(1), delta(1), epsilon(1). F(0) has three main subunits: a(1), b(2) and c(10-14). The alpha and beta chains form an alternating ring which encloses part of the gamma chain. F(1) is attached to F(0) by a central stalk formed by the gamma and epsilon chains, while a peripheral stalk is formed by the delta and b chains.

It localises to the cell inner membrane. Its function is as follows. F(1)F(0) ATP synthase produces ATP from ADP in the presence of a proton or sodium gradient. F-type ATPases consist of two structural domains, F(1) containing the extramembraneous catalytic core and F(0) containing the membrane proton channel, linked together by a central stalk and a peripheral stalk. During catalysis, ATP synthesis in the catalytic domain of F(1) is coupled via a rotary mechanism of the central stalk subunits to proton translocation. In terms of biological role, component of the F(0) channel, it forms part of the peripheral stalk, linking F(1) to F(0). This is ATP synthase subunit b 1 from Rhodopseudomonas palustris (strain BisB5).